Reading from the N-terminus, the 539-residue chain is Tyrosinase (539 aa).

Cu cation is bound by residues His63, His84, His93, His290, His294, and His333. The 2'-(S-cysteinyl)-histidine (Cys-His) cross-link spans 82-84 (CHH).

This sequence belongs to the tyrosinase family. As to quaternary structure, homotetramer. Requires Cu(2+) as cofactor. In terms of processing, the N-terminus is blocked.

The enzyme catalyses 2 L-dopa + O2 = 2 L-dopaquinone + 2 H2O. It catalyses the reaction L-tyrosine + O2 = L-dopaquinone + H2O. Its activity is regulated as follows. Activated by acidifying treatment at pH 3.0. In terms of biological role, this is a copper-containing oxidase that functions in the formation of pigments such as melanins and other polyphenolic compounds. This is Tyrosinase (melO) from Aspergillus oryzae (strain ATCC 42149 / RIB 40) (Yellow koji mold).